The chain runs to 321 residues: Replication factor C small subunit (321 aa).

ATP is bound at residue 43-50; the sequence is GFAGVGKT.

It belongs to the activator 1 small subunits family. RfcS subfamily. Heteromultimer composed of small subunits (RfcS) and large subunits (RfcL).

Its function is as follows. Part of the RFC clamp loader complex which loads the PCNA sliding clamp onto DNA. This is Replication factor C small subunit from Methanosphaera stadtmanae (strain ATCC 43021 / DSM 3091 / JCM 11832 / MCB-3).